A 432-amino-acid polypeptide reads, in one-letter code: Adenylosuccinate synthetase (432 aa).

GTP contacts are provided by residues 13-19 (GDEGKGK) and 41-43 (GHT). The Proton acceptor role is filled by D14. Mg(2+) is bound by residues D14 and G41. IMP is bound by residues 14–17 (DEGK), 39–42 (NAGH), T131, R145, Q226, T241, and R305. H42 acts as the Proton donor in catalysis. Residue 301–307 (SVTGRAR) participates in substrate binding. GTP-binding positions include R307, 333–335 (KLD), and 416–418 (STG).

The protein belongs to the adenylosuccinate synthetase family. As to quaternary structure, homodimer. The cofactor is Mg(2+).

The protein localises to the cytoplasm. It carries out the reaction IMP + L-aspartate + GTP = N(6)-(1,2-dicarboxyethyl)-AMP + GDP + phosphate + 2 H(+). The protein operates within purine metabolism; AMP biosynthesis via de novo pathway; AMP from IMP: step 1/2. Its function is as follows. Plays an important role in the de novo pathway of purine nucleotide biosynthesis. Catalyzes the first committed step in the biosynthesis of AMP from IMP. This chain is Adenylosuccinate synthetase, found in Neisseria meningitidis serogroup C (strain 053442).